Here is a 414-residue protein sequence, read N- to C-terminus: Probable uracil permease (414 aa).

Over 1 to 14 the chain is Cytoplasmic; sequence MTNQIPPSLAENQS. The helical transmembrane segment at 15-38 threads the bilayer; sequence KLKQSFVGLQMLFVAFGALVLVPL. Residues 39–42 lie on the Periplasmic side of the membrane; the sequence is ITGL. The helical transmembrane segment at 43 to 62 threads the bilayer; sequence DSNTALLTAGVGTLLFQFCT. The Cytoplasmic portion of the chain corresponds to 63–65; that stretch reads GKQ. The chain crosses the membrane as a discontinuously helical span at residues 66–82; it reads VPIFLASSFAFIAPIQY. Uracil is bound at residue Phe74. At 83–91 the chain is on the periplasmic side; the sequence is GVQTWGIAT. Residues 92–112 traverse the membrane as a helical segment; sequence TMGGLAFTGLVYFALSTLVKL. Residues 113–124 are Cytoplasmic-facing; the sequence is RGAEALQRFFPP. A helical transmembrane segment spans residues 125-146; that stretch reads VVVGPVIIIIGMGLAPIAVDMS. Residues 147-155 lie on the Periplasmic side of the membrane; the sequence is LGKNSAYAY. A helical transmembrane segment spans residues 156–171; the sequence is NDAVLVSMVTLLTTLS. Over 172–178 the chain is Cytoplasmic; that stretch reads VAVFAKG. The helical transmembrane segment at 179–199 threads the bilayer; the sequence is LMKLIPIMFGITAGYILCLFL. Residues 200 to 224 are Periplasmic-facing; the sequence is GLINFQPVIDAPWFSLPKLTTPEFN. Residues 225 to 248 traverse the membrane as a helical segment; that stretch reads LEAILYMLPIAIAPAVEHVGGIMA. Glu241 contributes to the uracil binding site. Over 249–261 the chain is Cytoplasmic; that stretch reads ISSVTGKDFLKKP. The chain crosses the membrane as a helical span at residues 262–281; sequence GLHRTLLGDGIATAAASLVG. The chain crosses the membrane as a discontinuously helical span at residues 282–298; sequence GPPNTTYAEVTGAVMLT. Glu290 is a binding site for uracil. Residues 299–301 are Cytoplasmic-facing; sequence RNF. A helical transmembrane segment spans residues 302–319; the sequence is NPNIMTWAAVWAIAISFC. Topologically, residues 320–332 are periplasmic; sequence GKVGAFLSTIPTI. Residues 333 to 354 traverse the membrane as a helical segment; the sequence is VMGGIMMLVFGSIAVVGMSTLI. Over 355–365 the chain is Cytoplasmic; it reads RGKVDVTEARN. The discontinuously helical intramembrane region spans 366-401; it reads LCIISVVMTFGIGNMFVDVGNVSLKGISLCAIVAII. The Cytoplasmic portion of the chain corresponds to 402-414; sequence LNLVLPKAKNEVE.

This sequence belongs to the nucleobase:cation symporter-2 (NCS2) (TC 2.A.40) family.

It localises to the cell inner membrane. The catalysed reaction is uracil(in) + H(+)(in) = uracil(out) + H(+)(out). Functionally, transport of uracil in the cell. In Haemophilus influenzae (strain ATCC 51907 / DSM 11121 / KW20 / Rd), this protein is Probable uracil permease (uraA).